The sequence spans 59 residues: Large ribosomal subunit protein bL32 (59 aa).

Positions 1–59 are disordered; the sequence is MAVQQNKKSPSKRGMHRSHDFLTTSPLAVEPSTGEVHLRHHISPNGYYRGKKVVKTKND. The span at 49-59 shows a compositional bias: basic residues; it reads RGKKVVKTKND.

The protein belongs to the bacterial ribosomal protein bL32 family.

This is Large ribosomal subunit protein bL32 from Burkholderia mallei (strain NCTC 10247).